The sequence spans 709 residues: DCC-interacting protein 13-alpha (709 aa).

Residues 1 to 428 (MPGIDKLPIE…RPPTARTSSS (428 aa)) are required for RAB5A binding. The 266-residue stretch at 3 to 268 (GIDKLPIEET…DPLYVPDPDP (266 aa)) folds into the BAR domain. Positions 215 to 259 (SENLNEQLEEFLANIGTSVQNVRREMDSDIETMQQTIEDLEVASD) form a coiled coil. The region spanning 277–375 (LTRKAGYLNA…WICTINNISK (99 aa)) is the PH domain. 3 disordered regions span residues 397–434 (AVTPSPSFQQRHESLRPAAGQSRPPTARTSSSGSLGSE), 467–491 (GQAKAFGQGGRRTNPFGESGGSTKS), and 645–709 (VKEK…ESEA). T399 is modified (phosphothreonine). Position 401 is a phosphoserine (S401). The F&amp;H motif lies at 403-414 (SFQQRHESLRPA). At S410 the chain carries Phosphoserine; by PKA. The PID domain occupies 496 to 656 (SILHQLFIVR…EKQQKELNKQ (161 aa)). Residues 621-673 (LAKQIALHAELDRRASEKQKEIERVKEKQQKELNKQKQIEKDLEEQSRLIAAS) are a coiled coil. A compositionally biased stretch (basic and acidic residues) spans 645-667 (VKEKQQKELNKQKQIEKDLEEQS). Residues 674–693 (SRPNQASSEGQFVVLSSSQS) are compositionally biased toward polar residues. Phosphoserine occurs at positions 693 and 696. Basic and acidic residues predominate over residues 700-709 (EGGKKRESEA).

In terms of assembly, homodimer. Binds RAB5A/Rab5 through an N-terminal domain. This interaction is essential for its recruitment to endosomal membranes as well as its role in cell proliferation. Binds DCC and the catalytic domain of the inactive form of AKT2 through its PID domain. Binds PIK3CA and subunits of the NuRD/MeCP1 complex. Interacts with OCRL and INPP5B. Interacts with NTRK2. Interacts with APPL2; interaction is independent of follicle stimulating hormone stimulation; interaction is decreased by adiponectin in a time-dependent manner. Forms a complex with APPL2 and RUVBL2. Forms a complex comprising APPL2, RUVBL2, CTNNB1, HDAC1 and HDAC2; interaction reduces interaction between CTNNB1, HDAC1, HDAC2 and RUVBL2 leading to the decrease of deacetylase activity of this complex; affects the recruitment of repressive complexes to the Wnt target genes. Interacts with ANXA2. Interacts with TGFBR1; interaction is TGF beta dependent; mediates trafficking of the TGFBR1 from the endosomes to the nucleus via microtubules in a TRAF6-dependent manner. Interacts with PRKCZ. Interacts with PIK3R1 and APPL2. Interacts with ADIPOR1; ADIPOQ enhances this interaction; inhibites adiponectin-stimulated binding of APPL2 to ADIPOR1. Phosphorylation at Ser-410 by PKA severely impairs binding to OCRL. In terms of tissue distribution, high levels in heart, ovary, pancreas and skeletal muscle.

The protein localises to the early endosome membrane. It is found in the nucleus. It localises to the cytoplasm. Its subcellular location is the endosome. The protein resides in the cell projection. The protein localises to the ruffle. It is found in the cytoplasmic vesicle. It localises to the phagosome. In terms of biological role, multifunctional adapter protein that binds to various membrane receptors, nuclear factors and signaling proteins to regulate many processes, such as cell proliferation, immune response, endosomal trafficking and cell metabolism. Regulates signaling pathway leading to cell proliferation through interaction with RAB5A and subunits of the NuRD/MeCP1 complex. Functions as a positive regulator of innate immune response via activation of AKT1 signaling pathway by forming a complex with APPL1 and PIK3R1. Inhibits Fc-gamma receptor-mediated phagocytosis through PI3K/Akt signaling in macrophages. Regulates TLR4 signaling in activated macrophages. Involved in trafficking of the TGFBR1 from the endosomes to the nucleus via microtubules in a TRAF6-dependent manner. Plays a role in cell metabolism by regulating adiponecting and insulin signaling pathways. Required for fibroblast migration through HGF cell signaling. Positive regulator of beta-catenin/TCF-dependent transcription through direct interaction with RUVBL2/reptin resulting in the relief of RUVBL2-mediated repression of beta-catenin/TCF target genes by modulating the interactions within the beta-catenin-reptin-HDAC complex. This is DCC-interacting protein 13-alpha from Homo sapiens (Human).